The sequence spans 300 residues: GTPase Era (300 aa).

One can recognise an Era-type G domain in the interval 4-173 (KYGIVAIVGK…INTIKQYLHK (170 aa)). The G1 stretch occupies residues 12-19 (GKPNVGKS). Residue 12–19 (GKPNVGKS) participates in GTP binding. The segment at 38–42 (QTTRN) is G2. Positions 59-62 (DTPG) are G3. Residues 59–63 (DTPGF) and 122–125 (SKAE) each bind GTP. A G4 region spans residues 122–125 (SKAE). The G5 stretch occupies residues 152–154 (ISA). In terms of domain architecture, KH type-2 spans 204–282 (LNHEVPHGVG…SLTIFVKVEN (79 aa)).

Belongs to the TRAFAC class TrmE-Era-EngA-EngB-Septin-like GTPase superfamily. Era GTPase family. Monomer.

Its subcellular location is the cytoplasm. The protein resides in the cell membrane. An essential GTPase that binds both GDP and GTP, with rapid nucleotide exchange. Plays a role in 16S rRNA processing and 30S ribosomal subunit biogenesis and possibly also in cell cycle regulation and energy metabolism. The protein is GTPase Era of Ureaplasma urealyticum serovar 10 (strain ATCC 33699 / Western).